The primary structure comprises 172 residues: Transcription factor E (172 aa).

The HTH TFE/IIEalpha-type domain maps to 8–90; sequence DDPVVQKYLH…LWTFQYENVP (83 aa).

Belongs to the TFE family. As to quaternary structure, monomer. Interaction with RNA polymerase subunits RpoF and RpoE is necessary for Tfe stimulatory transcription activity. Able to interact with Tbp and RNA polymerase in the absence of DNA promoter. Interacts both with the preinitiation and elongation complexes.

Its function is as follows. Transcription factor that plays a role in the activation of archaeal genes transcribed by RNA polymerase. Facilitates transcription initiation by enhancing TATA-box recognition by TATA-box-binding protein (Tbp), and transcription factor B (Tfb) and RNA polymerase recruitment. Not absolutely required for transcription in vitro, but particularly important in cases where Tbp or Tfb function is not optimal. It dynamically alters the nucleic acid-binding properties of RNA polymerases by stabilizing the initiation complex and destabilizing elongation complexes. Seems to translocate with the RNA polymerase following initiation and acts by binding to the non template strand of the transcription bubble in elongation complexes. The polypeptide is Transcription factor E (Halobacterium salinarum (strain ATCC 700922 / JCM 11081 / NRC-1) (Halobacterium halobium)).